Reading from the N-terminus, the 310-residue chain is Beta-1,3-galactosyltransferase 5 (310 aa).

At 1–7 (MAFPKMR) the chain is on the cytoplasmic side. Residues 8–28 (LMYICLLVLGALCLYFSMYSL) form a helical; Signal-anchor for type II membrane protein membrane-spanning segment. Residues 29 to 310 (NPFKEQSFVY…NSRGEDCPPV (282 aa)) are Lumenal-facing. N-linked (GlcNAc...) asparagine glycans are attached at residues Asn130, Asn174, and Asn231.

The protein belongs to the glycosyltransferase 31 family. Expressed in stomach, jejunum, colon, pancreas, small intestine, testis and gastrointestinal and pancreatic cancer cell lines. Hardly detected in lung, liver, adrenal gland and peripheral blood leukocytes.

It localises to the golgi apparatus membrane. It carries out the reaction a globoside Gb4Cer (d18:1(4E)) + UDP-alpha-D-galactose = a globoside GalGb4Cer (d18:1(4E)) + UDP + H(+). The protein operates within protein modification; protein glycosylation. Its function is as follows. Catalyzes the transfer of Gal to GlcNAc-based acceptors with a preference for the core3 O-linked glycan GlcNAc(beta1,3)GalNAc structure. Can use glycolipid LC3Cer as an efficient acceptor. This is Beta-1,3-galactosyltransferase 5 from Homo sapiens (Human).